A 162-amino-acid chain; its full sequence is RxLR effector protein PITG_06094 (162 aa).

The signal sequence occupies residues M1–A20. A RxLR-dEER motif is present at residues R51–R91. The tract at residues Y56–E88 is disordered.

This sequence belongs to the RxLR effector family.

It is found in the secreted. The protein localises to the host cytoplasm. The protein resides in the host nucleus. It localises to the host nucleolus. Its function is as follows. Effector that enhances P.infestans colonization of Nicotiana benthamiana leaves. This Phytophthora infestans (strain T30-4) (Potato late blight agent) protein is RxLR effector protein PITG_06094.